A 307-amino-acid polypeptide reads, in one-letter code: Probable aspartoacylase (307 aa).

Positions 13 and 16 each coordinate Zn(2+). Substrate contacts are provided by residues arginine 55 and 62 to 63; that span reads NR. Histidine 105 contributes to the Zn(2+) binding site. Substrate contacts are provided by glutamate 163 and tyrosine 276.

It belongs to the AspA/AstE family. Aspartoacylase subfamily. Zn(2+) serves as cofactor.

It catalyses the reaction an N-acyl-L-aspartate + H2O = a carboxylate + L-aspartate. This Prochlorococcus marinus (strain SARG / CCMP1375 / SS120) protein is Probable aspartoacylase.